Here is a 246-residue protein sequence, read N- to C-terminus: DNA polymerase sliding clamp (246 aa).

The protein belongs to the PCNA family. Homotrimer. The subunits circularize to form a toroid; DNA passes through its center. Replication factor C (RFC) is required to load the toroid on the DNA.

Its function is as follows. Sliding clamp subunit that acts as a moving platform for DNA processing. Responsible for tethering the catalytic subunit of DNA polymerase and other proteins to DNA during high-speed replication. The chain is DNA polymerase sliding clamp from Thermoplasma acidophilum (strain ATCC 25905 / DSM 1728 / JCM 9062 / NBRC 15155 / AMRC-C165).